A 417-amino-acid chain; its full sequence is Alpha-ionylideneethane synthase aba3 (417 aa).

This sequence belongs to the alpha-ionylideneethane synthase family.

It participates in hormone biosynthesis. Its function is as follows. Alpha-ionylideneethane synthase; part of the gene cluster that mediates the biosynthesis of abscisic acid (ABA), a phytohormone that acts antagonistically toward salicylic acid (SA), jasmonic acid (JA) and ethylene (ETH) signaling, to impede plant defense responses. The first step of the pathway catalyzes the reaction from farnesyl diphosphate to alpha-ionylideneethane performed by the alpha-ionylideneethane synthase aba3 via a three-step reaction mechanism involving 2 neutral intermediates, beta-farnesene and allofarnesene. The cytochrome P450 monooxygenase aba1 might then be involved in the conversion of alpha-ionylideneethane to alpha-ionylideneacetic acid. Alpha-ionylideneacetic acid is further converted to abscisic acid in 2 steps involving the cytochrome P450 monooxygenase aba2 and the short-chain dehydrogenase/reductase aba4, via the intermediates 1'-deoxy-ABA or 1',4'-trans-diol-ABA, depending on the order of action of these 2 enzymes. Aba2 is responsible for the hydroxylation of carbon atom C-1' and aba4 might be involved in the oxidation of the C-4' carbon atom. The polypeptide is Alpha-ionylideneethane synthase aba3 (Botryotinia fuckeliana (Noble rot fungus)).